Here is a 396-residue protein sequence, read N- to C-terminus: Probable sugar efflux transporter (396 aa).

The next 12 helical transmembrane spans lie at 15-35 (VVTL…PVGL), 50-70 (VGIM…PFML), 81-101 (LICL…AWNF), 103-123 (VLVI…SITA), 136-156 (AQAL…GLPI), 169-189 (TFFA…KLLP), 209-229 (PALM…YTAY), 246-266 (FATV…LVFG), 275-295 (SLVS…LPAA), 301-321 (LAIL…GMQV), 333-353 (VAMA…ALVG), and 364-384 (AIGY…VLIF).

The protein belongs to the major facilitator superfamily. SotB (TC 2.A.1.2) family.

It is found in the cell inner membrane. Functionally, involved in the efflux of sugars. The physiological role may be the reduction of the intracellular concentration of toxic sugars or sugar metabolites. This is Probable sugar efflux transporter from Salmonella schwarzengrund (strain CVM19633).